Consider the following 120-residue polypeptide: Large ribosomal subunit protein uL22 (120 aa).

Belongs to the universal ribosomal protein uL22 family. Part of the 50S ribosomal subunit.

Its function is as follows. This protein binds specifically to 23S rRNA; its binding is stimulated by other ribosomal proteins, e.g. L4, L17, and L20. It is important during the early stages of 50S assembly. It makes multiple contacts with different domains of the 23S rRNA in the assembled 50S subunit and ribosome. In terms of biological role, the globular domain of the protein is located near the polypeptide exit tunnel on the outside of the subunit, while an extended beta-hairpin is found that lines the wall of the exit tunnel in the center of the 70S ribosome. The protein is Large ribosomal subunit protein uL22 of Corynebacterium urealyticum (strain ATCC 43042 / DSM 7109).